Consider the following 332-residue polypeptide: UPF0194 membrane protein YbhG (332 aa).

Positions 1–16 (MMKKPVVIGLAVVVLA) are cleaved as a signal peptide. A coiled-coil region spans residues 141-210 (RTISANDLEN…NLQDSTLIAP (70 aa)).

It belongs to the UPF0194 family.

Its subcellular location is the periplasm. The polypeptide is UPF0194 membrane protein YbhG (ybhG) (Shigella flexneri).